Consider the following 315-residue polypeptide: Homoserine kinase (315 aa).

97–107 (PPARGLGSSAT) provides a ligand contact to ATP.

This sequence belongs to the GHMP kinase family. Homoserine kinase subfamily.

The protein resides in the cytoplasm. It carries out the reaction L-homoserine + ATP = O-phospho-L-homoserine + ADP + H(+). Its pathway is amino-acid biosynthesis; L-threonine biosynthesis; L-threonine from L-aspartate: step 4/5. In terms of biological role, catalyzes the ATP-dependent phosphorylation of L-homoserine to L-homoserine phosphate. The polypeptide is Homoserine kinase (Synechococcus sp. (strain CC9605)).